The sequence spans 237 residues: Ribonuclease PH (237 aa).

Phosphate-binding positions include R86 and 124–126 (GTR).

This sequence belongs to the RNase PH family. Homohexameric ring arranged as a trimer of dimers.

It carries out the reaction tRNA(n+1) + phosphate = tRNA(n) + a ribonucleoside 5'-diphosphate. Its function is as follows. Phosphorolytic 3'-5' exoribonuclease that plays an important role in tRNA 3'-end maturation. Removes nucleotide residues following the 3'-CCA terminus of tRNAs; can also add nucleotides to the ends of RNA molecules by using nucleoside diphosphates as substrates, but this may not be physiologically important. Probably plays a role in initiation of 16S rRNA degradation (leading to ribosome degradation) during starvation. This is Ribonuclease PH from Beijerinckia indica subsp. indica (strain ATCC 9039 / DSM 1715 / NCIMB 8712).